The sequence spans 455 residues: Bifunctional protein GlmU (455 aa).

The pyrophosphorylase stretch occupies residues 1–230; sequence MSNRFAVILA…VEETLGVNDR (230 aa). UDP-N-acetyl-alpha-D-glucosamine-binding positions include 9–12, Lys23, Gln73, and 78–79; these read LAAG and GT. Asp103 contributes to the Mg(2+) binding site. 4 residues coordinate UDP-N-acetyl-alpha-D-glucosamine: Gly140, Glu155, Asn170, and Asn228. Asn228 serves as a coordination point for Mg(2+). The tract at residues 231 to 251 is linker; the sequence is VALAQAEQVMKRRINEAWMRK. An N-acetyltransferase region spans residues 252–455; it reads GVTFIDPEQT…KEHYVTKKNN (204 aa). UDP-N-acetyl-alpha-D-glucosamine is bound by residues Arg333 and Lys351. The active-site Proton acceptor is His363. Positions 366 and 377 each coordinate UDP-N-acetyl-alpha-D-glucosamine. Residues 386–387, Ala423, and Arg440 contribute to the acetyl-CoA site; that span reads NY.

It in the N-terminal section; belongs to the N-acetylglucosamine-1-phosphate uridyltransferase family. The protein in the C-terminal section; belongs to the transferase hexapeptide repeat family. In terms of assembly, homotrimer. Requires Mg(2+) as cofactor.

It is found in the cytoplasm. It carries out the reaction alpha-D-glucosamine 1-phosphate + acetyl-CoA = N-acetyl-alpha-D-glucosamine 1-phosphate + CoA + H(+). The enzyme catalyses N-acetyl-alpha-D-glucosamine 1-phosphate + UTP + H(+) = UDP-N-acetyl-alpha-D-glucosamine + diphosphate. Its pathway is nucleotide-sugar biosynthesis; UDP-N-acetyl-alpha-D-glucosamine biosynthesis; N-acetyl-alpha-D-glucosamine 1-phosphate from alpha-D-glucosamine 6-phosphate (route II): step 2/2. It functions in the pathway nucleotide-sugar biosynthesis; UDP-N-acetyl-alpha-D-glucosamine biosynthesis; UDP-N-acetyl-alpha-D-glucosamine from N-acetyl-alpha-D-glucosamine 1-phosphate: step 1/1. The protein operates within bacterial outer membrane biogenesis; LPS lipid A biosynthesis. Catalyzes the last two sequential reactions in the de novo biosynthetic pathway for UDP-N-acetylglucosamine (UDP-GlcNAc). The C-terminal domain catalyzes the transfer of acetyl group from acetyl coenzyme A to glucosamine-1-phosphate (GlcN-1-P) to produce N-acetylglucosamine-1-phosphate (GlcNAc-1-P), which is converted into UDP-GlcNAc by the transfer of uridine 5-monophosphate (from uridine 5-triphosphate), a reaction catalyzed by the N-terminal domain. The sequence is that of Bifunctional protein GlmU from Halalkalibacterium halodurans (strain ATCC BAA-125 / DSM 18197 / FERM 7344 / JCM 9153 / C-125) (Bacillus halodurans).